We begin with the raw amino-acid sequence, 313 residues long: Formimidoylglutamase (313 aa).

Residues histidine 130, aspartate 155, histidine 157, aspartate 159, aspartate 241, and aspartate 243 each contribute to the Mn(2+) site.

Belongs to the arginase family. The cofactor is Mn(2+).

The catalysed reaction is N-formimidoyl-L-glutamate + H2O = formamide + L-glutamate. The protein operates within amino-acid degradation; L-histidine degradation into L-glutamate; L-glutamate from N-formimidoyl-L-glutamate (hydrolase route): step 1/1. Functionally, catalyzes the conversion of N-formimidoyl-L-glutamate to L-glutamate and formamide. In Salmonella arizonae (strain ATCC BAA-731 / CDC346-86 / RSK2980), this protein is Formimidoylglutamase.